The sequence spans 124 residues: Large ribosomal subunit protein bL21 (124 aa).

The disordered stretch occupies residues 105-124; it reads NAPSIGPRVRKAKPAAEAAE.

Belongs to the bacterial ribosomal protein bL21 family. In terms of assembly, part of the 50S ribosomal subunit. Contacts protein L20.

Its function is as follows. This protein binds to 23S rRNA in the presence of protein L20. The chain is Large ribosomal subunit protein bL21 from Rhodopseudomonas palustris (strain BisA53).